Here is a 199-residue protein sequence, read N- to C-terminus: ATP-dependent Clp protease proteolytic subunit 2 (199 aa).

S98 serves as the catalytic Nucleophile. H123 is a catalytic residue.

The protein belongs to the peptidase S14 family. In terms of assembly, fourteen ClpP subunits assemble into 2 heptameric rings which stack back to back to give a disk-like structure with a central cavity, resembling the structure of eukaryotic proteasomes.

Its subcellular location is the cytoplasm. The catalysed reaction is Hydrolysis of proteins to small peptides in the presence of ATP and magnesium. alpha-casein is the usual test substrate. In the absence of ATP, only oligopeptides shorter than five residues are hydrolyzed (such as succinyl-Leu-Tyr-|-NHMec, and Leu-Tyr-Leu-|-Tyr-Trp, in which cleavage of the -Tyr-|-Leu- and -Tyr-|-Trp bonds also occurs).. Functionally, cleaves peptides in various proteins in a process that requires ATP hydrolysis. Has a chymotrypsin-like activity. Plays a major role in the degradation of misfolded proteins. The chain is ATP-dependent Clp protease proteolytic subunit 2 from Corynebacterium diphtheriae (strain ATCC 700971 / NCTC 13129 / Biotype gravis).